Here is a 163-residue protein sequence, read N- to C-terminus: Phosphopantetheine adenylyltransferase (163 aa).

A substrate-binding site is contributed by Thr10. ATP is bound by residues 10 to 11 (TF) and His18. The substrate site is built by Lys42, Leu74, and Arg88. ATP-binding positions include 89–91 (GLR), Glu99, and 124–130 (NSFISST).

Belongs to the bacterial CoaD family. In terms of assembly, homohexamer. Requires Mg(2+) as cofactor.

The protein resides in the cytoplasm. It carries out the reaction (R)-4'-phosphopantetheine + ATP + H(+) = 3'-dephospho-CoA + diphosphate. It participates in cofactor biosynthesis; coenzyme A biosynthesis; CoA from (R)-pantothenate: step 4/5. Its function is as follows. Reversibly transfers an adenylyl group from ATP to 4'-phosphopantetheine, yielding dephospho-CoA (dPCoA) and pyrophosphate. The polypeptide is Phosphopantetheine adenylyltransferase (Shewanella putrefaciens (strain CN-32 / ATCC BAA-453)).